The following is a 350-amino-acid chain: Ion-translocating oxidoreductase complex subunit D (350 aa).

The next 5 membrane-spanning stretches (helical) occupy residues 20–40, 42–62, 68–88, 89–109, and 123–143; these read IMMLVLIAALPGIATQLWFFG, GTLFQIILAAVSALAAEAAVL, PIAAILKDNSALLTGLLLAVS, IPPLAPWWMVVLGTVFAVIIA, and PAMIGYVVLLISFPVQMTSWL. Thr187 carries the post-translational modification FMN phosphoryl threonine. A run of 5 helical transmembrane segments spans residues 215 to 235, 244 to 264, 267 to 287, 301 to 321, and 322 to 342; these read LAGAGWQWVNIAWLIGGVWLL, IPVSFLVTLAVCSTLGWAFAG, LASPQLHLLSGATMLGAFFIL, LIFGALAGLLVWLIRSFGGYP, and DGVAFAVLLANITVPLIDYYT.

The protein belongs to the NqrB/RnfD family. As to quaternary structure, the complex is composed of six subunits: RnfA, RnfB, RnfC, RnfD, RnfE and RnfG. FMN serves as cofactor.

Its subcellular location is the cell inner membrane. Its function is as follows. Part of a membrane-bound complex that couples electron transfer with translocation of ions across the membrane. This Citrobacter koseri (strain ATCC BAA-895 / CDC 4225-83 / SGSC4696) protein is Ion-translocating oxidoreductase complex subunit D.